The chain runs to 62 residues: Small ribosomal subunit protein bS21C (62 aa).

Residues 43–62 (EKSKRKKLALHKQSKRRFRT) are disordered. Positions 45–62 (SKRKKLALHKQSKRRFRT) are enriched in basic residues.

Belongs to the bacterial ribosomal protein bS21 family.

This is Small ribosomal subunit protein bS21C from Trichormus variabilis (strain ATCC 29413 / PCC 7937) (Anabaena variabilis).